The chain runs to 310 residues: GTPase Era (310 aa).

The region spanning arginine 17–glutamate 184 is the Era-type G domain. Positions glycine 25–serine 32 are G1. Glycine 25 to serine 32 provides a ligand contact to GTP. Residues glutamine 51–alanine 55 are G2. Residues aspartate 72–glycine 75 are G3. GTP contacts are provided by residues aspartate 72 to isoleucine 76 and asparagine 134 to aspartate 137. The tract at residues asparagine 134 to aspartate 137 is G4. A G5 region spans residues isoleucine 163 to alanine 165. Residues leucine 215–glutamate 292 enclose the KH type-2 domain.

This sequence belongs to the TRAFAC class TrmE-Era-EngA-EngB-Septin-like GTPase superfamily. Era GTPase family. In terms of assembly, monomer.

The protein localises to the cytoplasm. It localises to the cell inner membrane. An essential GTPase that binds both GDP and GTP, with rapid nucleotide exchange. Plays a role in 16S rRNA processing and 30S ribosomal subunit biogenesis and possibly also in cell cycle regulation and energy metabolism. The chain is GTPase Era from Sinorhizobium medicae (strain WSM419) (Ensifer medicae).